Here is a 43-residue protein sequence, read N- to C-terminus: Defensin-A (43 aa).

3 disulfides stabilise this stretch: C3–C34, C20–C39, and C24–C41.

The protein resides in the secreted. Functionally, antibacterial protein. Strong activity against the Gram-positive bacteria M.luteus, B.megaterium and S.aureus. Reduced activity against Gram-positive bacterium B.subtilis and weak activity against Gram-negative bacterium X.japonicus. No detectable activity against the Gram-negative bacteria E.asbriae, E.coli, P.aeruginosa and S.marcescens. The sequence is that of Defensin-A from Anomala cuprea (Cupreous chafer beetle).